The sequence spans 309 residues: Porphobilinogen deaminase (309 aa).

At cysteine 234 the chain carries S-(dipyrrolylmethanemethyl)cysteine.

Belongs to the HMBS family. Monomer. Dipyrromethane is required as a cofactor.

The enzyme catalyses 4 porphobilinogen + H2O = hydroxymethylbilane + 4 NH4(+). It participates in porphyrin-containing compound metabolism; protoporphyrin-IX biosynthesis; coproporphyrinogen-III from 5-aminolevulinate: step 2/4. Tetrapolymerization of the monopyrrole PBG into the hydroxymethylbilane pre-uroporphyrinogen in several discrete steps. The chain is Porphobilinogen deaminase (hemC) from Mycobacterium bovis (strain ATCC BAA-935 / AF2122/97).